Reading from the N-terminus, the 66-residue chain is Large ribosomal subunit protein uL29 (66 aa).

This sequence belongs to the universal ribosomal protein uL29 family.

The polypeptide is Large ribosomal subunit protein uL29 (Rhizobium johnstonii (strain DSM 114642 / LMG 32736 / 3841) (Rhizobium leguminosarum bv. viciae)).